The chain runs to 210 residues: SAP domain-containing ribonucleoprotein (210 aa).

Residue alanine 2 is modified to N-acetylalanine. Residues leucine 8–leucine 42 enclose the SAP domain. N6-acetyllysine is present on lysine 10. Over residues histidine 45 to glutamate 64 the composition is skewed to acidic residues. Residues histidine 45–alanine 86 form a disordered region. The span at threonine 65–alanine 86 shows a compositional bias: basic and acidic residues. N6-acetyllysine is present on lysine 142. Positions valine 161–alanine 210 are disordered. Serine 163 is subject to Phosphoserine. Polar residues predominate over residues valine 184 to threonine 193.

Belongs to the SAP domain-containing ribonucleoprotein family. As to quaternary structure, interacts with DDX39A. Interacts with FUS. Interacts (via the C-terminal domain) with DDX39B; the interaction is direct and facilitates RNA binding of DDX39B. Component of the transcription/export (TREX) complex at least composed of ALYREF/THOC4, DDX39B, SARNP/CIP29, CHTOP and the THO subcomplex; TREX seems to have dynamic structure involving ATP-dependent remodeling; in the complex interacts directly with DDX39B in a ATP-dependent manner which bridges it to ALYREF/THOC4. As to expression, low expression in spleen, liver, pancreas, testis, thymus, heart, and kidney. Increased levels are seen in hepatocellular carcinoma and pancreatic adenocarcinoma.

The protein localises to the nucleus. It is found in the nucleus speckle. Functionally, binds both single-stranded and double-stranded DNA with higher affinity for the single-stranded form. Specifically binds to scaffold/matrix attachment region DNA. Also binds single-stranded RNA. Enhances RNA unwinding activity of DDX39A. May participate in important transcriptional or translational control of cell growth, metabolism and carcinogenesis. Component of the TREX complex which is thought to couple mRNA transcription, processing and nuclear export, and specifically associates with spliced mRNA and not with unspliced pre-mRNA. The TREX complex is recruited to spliced mRNAs by a transcription-independent mechanism, binds to mRNA upstream of the exon-junction complex (EJC) and is recruited in a splicing- and cap-dependent manner to a region near the 5' end of the mRNA where it functions in mRNA export to the cytoplasm via the TAP/NXF1 pathway. Associates with DDX39B, which facilitates RNA binding of DDX39B and likely plays a role in mRNA export. This is SAP domain-containing ribonucleoprotein (SARNP) from Homo sapiens (Human).